Consider the following 213-residue polypeptide: Orotate phosphoribosyltransferase (213 aa).

Lys-26 is a 5-phospho-alpha-D-ribose 1-diphosphate binding site. 34–35 (FF) contributes to the orotate binding site. 5-phospho-alpha-D-ribose 1-diphosphate-binding positions include 72-73 (YK), Arg-99, Lys-100, Lys-103, His-105, and 124-132 (DDVITAGTA). Positions 128 and 156 each coordinate orotate.

The protein belongs to the purine/pyrimidine phosphoribosyltransferase family. PyrE subfamily. Homodimer. Requires Mg(2+) as cofactor.

It catalyses the reaction orotidine 5'-phosphate + diphosphate = orotate + 5-phospho-alpha-D-ribose 1-diphosphate. It participates in pyrimidine metabolism; UMP biosynthesis via de novo pathway; UMP from orotate: step 1/2. Its function is as follows. Catalyzes the transfer of a ribosyl phosphate group from 5-phosphoribose 1-diphosphate to orotate, leading to the formation of orotidine monophosphate (OMP). This chain is Orotate phosphoribosyltransferase, found in Klebsiella pneumoniae (strain 342).